The primary structure comprises 131 residues: Large ribosomal subunit protein uL22 (131 aa).

The span at 1 to 11 (MAKGHRSKIKR) shows a compositional bias: basic residues. Positions 1-20 (MAKGHRSKIKRERNEVRDTR) are disordered.

Belongs to the universal ribosomal protein uL22 family. In terms of assembly, part of the 50S ribosomal subunit.

Functionally, this protein binds specifically to 23S rRNA; its binding is stimulated by other ribosomal proteins, e.g. L4, L17, and L20. It is important during the early stages of 50S assembly. It makes multiple contacts with different domains of the 23S rRNA in the assembled 50S subunit and ribosome. The globular domain of the protein is located near the polypeptide exit tunnel on the outside of the subunit, while an extended beta-hairpin is found that lines the wall of the exit tunnel in the center of the 70S ribosome. The sequence is that of Large ribosomal subunit protein uL22 from Agathobacter rectalis (strain ATCC 33656 / DSM 3377 / JCM 17463 / KCTC 5835 / VPI 0990) (Eubacterium rectale).